The following is an 85-amino-acid chain: Large ribosomal subunit protein bL31 (85 aa).

Residues 65 to 85 (YGMGGAGKAGEDKKAGDKADA) are disordered. A compositionally biased stretch (basic and acidic residues) spans 73–85 (AGEDKKAGDKADA).

Belongs to the bacterial ribosomal protein bL31 family. Type A subfamily. Part of the 50S ribosomal subunit.

Its function is as follows. Binds the 23S rRNA. In Synechococcus sp. (strain WH7803), this protein is Large ribosomal subunit protein bL31.